A 121-amino-acid chain; its full sequence is Small ribosomal subunit protein uS11 (121 aa).

The protein belongs to the universal ribosomal protein uS11 family. As to quaternary structure, part of the 30S ribosomal subunit. Interacts with proteins S7 and S18. Binds to IF-3.

In terms of biological role, located on the platform of the 30S subunit, it bridges several disparate RNA helices of the 16S rRNA. Forms part of the Shine-Dalgarno cleft in the 70S ribosome. The polypeptide is Small ribosomal subunit protein uS11 (Ureaplasma parvum serovar 3 (strain ATCC 27815 / 27 / NCTC 11736)).